A 226-amino-acid polypeptide reads, in one-letter code: MEPIKNLPRLCRTLGYEFKNLDLLTQALTHRSAANKHNERLEFLGDSILSIVISDALYHQFPKATEGDLSRMRATLVRGDTLTLIAQAFKLGDYLFLGPGELKSGGFRRESILADAVEAIIGAIYLDSDLEVCRQLLLNWYAERLAEIQPGINQKDAKTLLQEYLQGLKKPLPDYQVINIEGDAHDQTFTVECRIDDLSQSVIGVASSRRKAEQIAAAQVLELLKK.

The region spanning 7-129 is the RNase III domain; that stretch reads LPRLCRTLGY…IIGAIYLDSD (123 aa). Glutamate 42 is a binding site for Mg(2+). Aspartate 46 is a catalytic residue. Residues aspartate 115 and glutamate 118 each coordinate Mg(2+). The active site involves glutamate 118. The region spanning 156-226 is the DRBM domain; the sequence is DAKTLLQEYL…AAQVLELLKK (71 aa).

Belongs to the ribonuclease III family. In terms of assembly, homodimer. Requires Mg(2+) as cofactor.

It is found in the cytoplasm. The enzyme catalyses Endonucleolytic cleavage to 5'-phosphomonoester.. Functionally, digests double-stranded RNA. Involved in the processing of primary rRNA transcript to yield the immediate precursors to the large and small rRNAs (23S and 16S). Processes some mRNAs, and tRNAs when they are encoded in the rRNA operon. Processes pre-crRNA and tracrRNA of type II CRISPR loci if present in the organism. This is Ribonuclease 3 from Shewanella oneidensis (strain ATCC 700550 / JCM 31522 / CIP 106686 / LMG 19005 / NCIMB 14063 / MR-1).